The following is a 257-amino-acid chain: Imidazole glycerol phosphate synthase subunit HisF (257 aa).

Active-site residues include D11 and D130.

It belongs to the HisA/HisF family. As to quaternary structure, heterodimer of HisH and HisF.

It localises to the cytoplasm. It catalyses the reaction 5-[(5-phospho-1-deoxy-D-ribulos-1-ylimino)methylamino]-1-(5-phospho-beta-D-ribosyl)imidazole-4-carboxamide + L-glutamine = D-erythro-1-(imidazol-4-yl)glycerol 3-phosphate + 5-amino-1-(5-phospho-beta-D-ribosyl)imidazole-4-carboxamide + L-glutamate + H(+). Its pathway is amino-acid biosynthesis; L-histidine biosynthesis; L-histidine from 5-phospho-alpha-D-ribose 1-diphosphate: step 5/9. Its function is as follows. IGPS catalyzes the conversion of PRFAR and glutamine to IGP, AICAR and glutamate. The HisF subunit catalyzes the cyclization activity that produces IGP and AICAR from PRFAR using the ammonia provided by the HisH subunit. This is Imidazole glycerol phosphate synthase subunit HisF from Pseudoalteromonas translucida (strain TAC 125).